A 206-amino-acid chain; its full sequence is MRNTLDNLLNAAGIVISDKQKNLLIQYVDMLNKWNKAYNLTSVRDPQQMLVRHIMDSIVVEPHLHGQRFIDVGTGPGLPGIPLAIVRPDSHFTLLDSLGKRVRFLRQVQHELQLENITPVQSRVEEFPAEPPFDGVISRAFASLHDMISWCNHLPARPAGRFYALKGVLPEDELSSLPQGVSLDQVIRLSVPDLEGERHLVVLKPN.

Residues Gly-73, Leu-78, 124 to 125 (VE), and Arg-139 each bind S-adenosyl-L-methionine.

The protein belongs to the methyltransferase superfamily. RNA methyltransferase RsmG family.

It localises to the cytoplasm. The catalysed reaction is guanosine(527) in 16S rRNA + S-adenosyl-L-methionine = N(7)-methylguanosine(527) in 16S rRNA + S-adenosyl-L-homocysteine. Its function is as follows. Specifically methylates the N7 position of guanine in position 527 of 16S rRNA. This is Ribosomal RNA small subunit methyltransferase G from Pectobacterium carotovorum subsp. carotovorum (strain PC1).